A 546-amino-acid polypeptide reads, in one-letter code: uncharacterized protein (546 aa).

Transmembrane regions (helical) follow at residues 27-46 (EALV…PFVF), 59-78 (NGLI…ALVT), 83-100 (FALI…YAIL), 114-134 (SVLF…AYAA), 143-163 (PLII…IPIF), 176-196 (MLYS…ALGI), 204-224 (VIAV…VFTA), 237-257 (LSSA…FGVF), and 268-288 (MIWI…LIGW).

The protein localises to the cell membrane. This is an uncharacterized protein from Bacillus subtilis (strain 168).